The chain runs to 656 residues: Macrolide export ATP-binding/permease protein MacB (656 aa).

An ABC transporter domain is found at 6–244; that stretch reads LEVSACYRSF…VKAQVDMSLA (239 aa). 42–49 lines the ATP pocket; sequence GASGSGKS. 4 consecutive transmembrane segments (helical) span residues 277–297, 531–551, 586–606, and 621–641; these read FLTM…VALG, LLIS…VMNI, LVCL…GVVF, and SIVA…FLPA.

The protein belongs to the ABC transporter superfamily. Macrolide exporter (TC 3.A.1.122) family. As to quaternary structure, homodimer. Part of the tripartite efflux system MacAB-TolC, which is composed of an inner membrane transporter, MacB, a periplasmic membrane fusion protein, MacA, and an outer membrane component, TolC. The complex forms a large protein conduit and can translocate molecules across both the inner and outer membranes. Interacts with MacA.

Its subcellular location is the cell inner membrane. In terms of biological role, part of the tripartite efflux system MacAB-TolC. MacB is a non-canonical ABC transporter that contains transmembrane domains (TMD), which form a pore in the inner membrane, and an ATP-binding domain (NBD), which is responsible for energy generation. Confers resistance against macrolides. The polypeptide is Macrolide export ATP-binding/permease protein MacB (Shewanella oneidensis (strain ATCC 700550 / JCM 31522 / CIP 106686 / LMG 19005 / NCIMB 14063 / MR-1)).